We begin with the raw amino-acid sequence, 544 residues long: MSKFIFVTGGVVSSVGKGITVASLGNILKSRGLSVSVQKLDPYLNVDPGTMSPYQHGEVFVTQDGAETDLDLGSYERFIDIELTADSTVTSGQVYSEVINKERRGDYLGGTIQVVPHVTQEIKARIQRLADRSKADVVIVEVGGTVGDIEGQPFLEAIRQMRNDTGRDNVLYIHVTLLPYIQSTQELKTKPTQHSVNELRRIGIQPDIIVCRADYPISEGIRDKISLFCDVERKAVIFMPTVSTIYEVPLKLESEGVGDLLVSRLHLNASPSDLSVWRGLVEKIKEPTPTVRIALVGKYVELKDAYYSVRESLCHAAIHNGRDIQIDWVHAEDIEKNGPEEYLKHVQGIIIPGGFGIRGIEGMISAVKYARENGIPYLGLCLGMQVMVIEFARYVLGSDKAHSTEFEPDSPYPVIDLLPEQRGVDSKGGTMRLGNYPCVIQPGTMAGQAYGNNLINERHRHRFEFNNDYRDTLSKAGMLFSGLSPDGKLVEICEVTGHPFMMGSQFHPEFLSRPNRPHPLFREFINAAKKVIRDGEQPSLPLSP.

Positions 1-267 (MSKFIFVTGG…GDLLVSRLHL (267 aa)) are amidoligase domain. Serine 13 contacts CTP. Serine 13 contributes to the UTP binding site. Residue 14-19 (SVGKGI) coordinates ATP. Tyrosine 54 is a binding site for L-glutamine. Aspartate 71 contacts ATP. The Mg(2+) site is built by aspartate 71 and glutamate 141. CTP contacts are provided by residues 148 to 150 (DIE), 188 to 193 (KTKPTQ), and lysine 224. Residues 188 to 193 (KTKPTQ) and lysine 224 each bind UTP. The Glutamine amidotransferase type-1 domain maps to 299–534 (YVELKDAYYS…INAAKKVIRD (236 aa)). Residue glycine 354 coordinates L-glutamine. Cysteine 381 (nucleophile; for glutamine hydrolysis) is an active-site residue. Residues 382 to 385 (LGMQ), glutamate 405, and arginine 462 each bind L-glutamine. Residues histidine 507 and glutamate 509 contribute to the active site.

Belongs to the CTP synthase family. As to quaternary structure, homotetramer.

It catalyses the reaction UTP + L-glutamine + ATP + H2O = CTP + L-glutamate + ADP + phosphate + 2 H(+). The catalysed reaction is L-glutamine + H2O = L-glutamate + NH4(+). It carries out the reaction UTP + NH4(+) + ATP = CTP + ADP + phosphate + 2 H(+). The protein operates within pyrimidine metabolism; CTP biosynthesis via de novo pathway; CTP from UDP: step 2/2. With respect to regulation, allosterically activated by GTP, when glutamine is the substrate; GTP has no effect on the reaction when ammonia is the substrate. The allosteric effector GTP functions by stabilizing the protein conformation that binds the tetrahedral intermediate(s) formed during glutamine hydrolysis. Inhibited by the product CTP, via allosteric rather than competitive inhibition. In terms of biological role, catalyzes the ATP-dependent amination of UTP to CTP with either L-glutamine or ammonia as the source of nitrogen. Regulates intracellular CTP levels through interactions with the four ribonucleotide triphosphates. The sequence is that of CTP synthase from Dehalococcoides mccartyi (strain ATCC BAA-2100 / JCM 16839 / KCTC 5957 / BAV1).